A 540-amino-acid chain; its full sequence is MLFCDDSKKYLKEQNINLKNEFDKDDKRVEKFSLKHQNIYFDYSKNLINDYILKSLLESAEKSSLKDKIKQMFNGAKINSTEHRAVLHTALRDLSSTPLIVDGQDIRQEVTKEKQRVKELVEKVVSGRWRGFSGKKITDIVNIGIGGSDLGPKMVVRALQPYHCTDLKVHFVSNVDADSLLQALHVVDPETTLFIIASKSFSTEETLLNSISAREWLLDHYEDEKAVANHFVAISSKLDKVKEFGIDLEHCYKMWDWVGGRYSLWSSIGMSIAFAIGYDNFEKLLAGAYSVDKHFKETEFSKNIPVIMALLASYYSCTYNSQSQALLPYDERLCYFVDYLQQADMESNGKSVNIAGETVNYQTGVVLWGGVGTNGQHAFHQLLHQGNIFIPVDFIAIATSHHNYDNHQQALLANCFAQSQALMFGQSYDMVYNELLKSGLNETQAKELAAHKVIPGNRPSTTILLDELSPYSLGALIALYEHKIFVQGVLWEINSYDQWGVELGKKLGKNILKAMNDDSSDEYQNLDDSTRQLIAKVKNK.

Glu-346 acts as the Proton donor in catalysis. Residues His-377 and Lys-505 contribute to the active site.

The protein belongs to the GPI family.

It localises to the cytoplasm. The enzyme catalyses alpha-D-glucose 6-phosphate = beta-D-fructose 6-phosphate. Its pathway is carbohydrate biosynthesis; gluconeogenesis. It participates in carbohydrate degradation; glycolysis; D-glyceraldehyde 3-phosphate and glycerone phosphate from D-glucose: step 2/4. Its function is as follows. Catalyzes the reversible isomerization of glucose-6-phosphate to fructose-6-phosphate. The sequence is that of Glucose-6-phosphate isomerase from Francisella tularensis subsp. mediasiatica (strain FSC147).